Reading from the N-terminus, the 369-residue chain is Homoserine O-succinyltransferase (369 aa).

The AB hydrolase-1 domain occupies 49-328; the sequence is NAVFICHALT…RFDSTQSARM (280 aa). Ser-154 acts as the Nucleophile in catalysis. Arg-224 lines the substrate pocket. Catalysis depends on residues Asp-317 and His-350. Asp-351 contacts substrate.

It belongs to the AB hydrolase superfamily. MetX family. As to quaternary structure, homodimer.

The protein localises to the cytoplasm. The enzyme catalyses L-homoserine + succinyl-CoA = O-succinyl-L-homoserine + CoA. The protein operates within amino-acid biosynthesis; L-methionine biosynthesis via de novo pathway; O-succinyl-L-homoserine from L-homoserine: step 1/1. Functionally, transfers a succinyl group from succinyl-CoA to L-homoserine, forming succinyl-L-homoserine. The polypeptide is Homoserine O-succinyltransferase (Nocardioides sp. (strain ATCC BAA-499 / JS614)).